A 481-amino-acid chain; its full sequence is Beta-1,3-glucan-binding protein (481 aa).

Positions 1–17 (MKVLVVFIFCLVRSTFG) are cleaved as a signal peptide. The CBM39 domain maps to 19-123 (FEVPDALVEV…QKFVVKQLLD (105 aa)). The region spanning 211–481 (HRLTIRPVPS…EVDYVKVSAL (271 aa)) is the GH16 domain. The N-linked (GlcNAc...) asparagine glycan is linked to Asn467.

It belongs to the insect beta-1,3-glucan binding protein family. The N-terminus is blocked. In terms of tissue distribution, hemolymph.

Its subcellular location is the secreted. Involved in the recognition of invading microorganisms. Binds specifically to beta-1,3-glucan and activates the phenoloxidase cascade. In Tenebrio molitor (Yellow mealworm beetle), this protein is Beta-1,3-glucan-binding protein (GRP).